Here is a 705-residue protein sequence, read N- to C-terminus: Ovotransferrin (705 aa).

The signal sequence occupies residues 1–19; it reads MKLILCTVLSLGIAAVCFA. Transferrin-like domains lie at 26–352 and 364–689; these read IRWC…SMRK and IQWC…SLKT. Disulfide bonds link cysteine 29–cysteine 64 and cysteine 39–cysteine 55. Fe(3+) contacts are provided by aspartate 79 and tyrosine 111. Cystine bridges form between cysteine 134/cysteine 216, cysteine 179/cysteine 193, cysteine 190/cysteine 201, and cysteine 247/cysteine 261. Hydrogencarbonate contacts are provided by threonine 136, arginine 140, alanine 142, and glycine 143. Residue tyrosine 210 participates in Fe(3+) binding. Fe(3+) is bound at residue histidine 269. The connecting region stretch occupies residues 352–360; that stretch reads KDQLTPSPR. Cystine bridges form between cysteine 367–cysteine 399 and cysteine 377–cysteine 390. Positions 414 and 450 each coordinate Fe(3+). Cystine bridges form between cysteine 424-cysteine 699, cysteine 440-cysteine 662, cysteine 473-cysteine 549, cysteine 497-cysteine 690, cysteine 507-cysteine 521, cysteine 518-cysteine 532, and cysteine 589-cysteine 603. Positions 475, 479, 481, and 482 each coordinate hydrogencarbonate. Asparagine 492 is a glycosylation site (N-linked (GlcNAc...) asparagine). Tyrosine 543 is a Fe(3+) binding site. Fe(3+) is bound at residue histidine 611.

Belongs to the transferrin family. As to quaternary structure, monomer. Post-translationally, different forms of hen transferrin are distinguished by their carbohydrate composition. Ovotransferrin and embryo serum transferrin but not adult serum transferrin, have bisecting N-acetylglucosamine. Transferrin secreted by embryo hepatocytes in primary culture is marked by the presence of (alpha1-6) fucosylation of the core N-acetylglucosamine. Serum transferrins also differ in the number of attached neuraminic acid residues. In both embryo forms, sialylation occurs on the Man (alpha 1-3)-linked antennae. Expressed in the magnum of the oviduct (at protein level).

It is found in the secreted. Transferrins are iron binding transport proteins which can bind two Fe(3+) ions in association with the binding of an anion, usually bicarbonate. Responsible for the transport of iron from sites of absorption and heme degradation to those of storage and utilization. There are two forms of hen transferrin, ovotransferrin, found in the ovoducts and, serum transferrin, secreted by the liver. Serum transferrin may also have a role in stimulating cell proliferation and is regulated by iron levels. Ovotransferrin has a bacteriostatic function and, is not controlled by iron levels. This chain is Ovotransferrin, found in Gallus gallus (Chicken).